Reading from the N-terminus, the 30-residue chain is Agglutinin alpha-1 chain (30 aa).

The 30-residue stretch at 1–30 (GVAFDDGSYTGIREINFEYNRETAIGGXQV) folds into the Jacalin-type lectin domain.

The protein belongs to the jacalin lectin family. Tetramer of four alpha chains associated with two or four beta chains.

N-acetyl-galactosamine and D-galactose specific lectin. Binds the Tn-antigen structure GalNAc-alpha-1-O-Ser, the T-antigen structure Gal-beta1-3-GalNAc and IgA. The polypeptide is Agglutinin alpha-1 chain (Morus nigra (Black mulberry)).